The primary structure comprises 725 residues: Protein ECM27 (725 aa).

Transmembrane regions (helical) follow at residues 21–41 (VTFIVPSLFHIIIAFVLLGIC), 119–139 (VLGACGIILCIVEGSIFIIMS), 157–177 (LLFSLAAMCVMSYVSLMNQVT), 178–198 (VLNCLLMAFLYAFYLVVKLTF), 397–417 (ISDAIFSIITVPFFIIFKLSC), 439–459 (LPIILLFIQSITAPFLLCSIL), 470–490 (LVYLFPLILAMALILLLTAFI), 526–546 (IQIIFLAIGIINIIIWISLLA), 559–579 (ILGLSKAILGLTIFAWGNSVG), 621–641 (LNSMGGIGFSGLVSMLFIGAF), 668–688 (FIVSCVFIILQIILLLLFFGG), and 704–724 (GISMCGLWALATLINILLELF).

This sequence belongs to the Ca(2+):cation antiporter (CaCA) (TC 2.A.19) family.

It is found in the membrane. The chain is Protein ECM27 (ECM27) from Saccharomyces cerevisiae (strain ATCC 204508 / S288c) (Baker's yeast).